Reading from the N-terminus, the 751-residue chain is Ecdysteroid-phosphate phosphatase (751 aa).

The UBA domain maps to cysteine 16–histidine 60. Residues alanine 271–glutamate 336 form the SH3 domain. Disordered stretches follow at residues glycine 367–serine 394 and glutamate 458–leucine 484. Residues arginine 466–leucine 479 show a composition bias toward basic and acidic residues. Residues lysine 490–threonine 751 form a phosphatase-like region. Residue arginine 498 is part of the active site. Catalysis depends on histidine 499, which acts as the Tele-phosphohistidine intermediate. Histidine 681 is an active-site residue.

The protein resides in the cytoplasm. Its subcellular location is the cytosol. It is found in the nucleus. The catalysed reaction is ecdysone 22-phosphate + H2O = ecdysone + phosphate. It carries out the reaction 20-hydroxyecdysone 22-phosphate + H2O = 20-hydroxyecdysone + phosphate. The enzyme catalyses 2-deoxyecdysone 22-phosphate + H2O = 2-deoxyecdysone + phosphate. In terms of biological role, steroid phosphatase that dephosphorylates ecdysteroids such as ecdysone 22-phosphate (E22P), 3-epi-ecdysone 22-phosphate (E22P) and 3-epi-ecdysone 2-phosphate (E2P). Likely catalyzes the conversion of inactive phosphorylated ecdysteroids into their active forms. Shows high activity towards ecdysone 22-phosphate (E22P), but is also significantly active against 3-epi-ecdysone 22-phosphate (E22P) and 3-epi-ecdysone 2-phosphate (E2P). Also displays acid phosphatase activity towards 4-nitrophenyl phosphate (pNNP) in vitro. Has no activity towards 3-epi-ecdysone 3-phosphate (E3P). This is Ecdysteroid-phosphate phosphatase from Drosophila melanogaster (Fruit fly).